Reading from the N-terminus, the 321-residue chain is o-succinylbenzoate synthase (321 aa).

The active-site Proton donor is the Lys134. Mg(2+) contacts are provided by Asp162, Glu191, and Asp214. Catalysis depends on Lys236, which acts as the Proton acceptor.

It belongs to the mandelate racemase/muconate lactonizing enzyme family. MenC type 1 subfamily. It depends on a divalent metal cation as a cofactor.

It carries out the reaction (1R,6R)-6-hydroxy-2-succinyl-cyclohexa-2,4-diene-1-carboxylate = 2-succinylbenzoate + H2O. The protein operates within quinol/quinone metabolism; 1,4-dihydroxy-2-naphthoate biosynthesis; 1,4-dihydroxy-2-naphthoate from chorismate: step 4/7. It participates in quinol/quinone metabolism; menaquinone biosynthesis. Converts 2-succinyl-6-hydroxy-2,4-cyclohexadiene-1-carboxylate (SHCHC) to 2-succinylbenzoate (OSB). This Klebsiella pneumoniae (strain 342) protein is o-succinylbenzoate synthase.